The sequence spans 437 residues: UDP-glucuronate 4-epimerase 4 (437 aa).

The helical transmembrane segment at Ser30–Leu50 threads the bilayer. The tract at residues Ile56–Gly76 is disordered. The helical transmembrane segment at Gly96 to Leu116 threads the bilayer. Thr98–Phe129 contributes to the NAD(+) binding site. Tyr248 functions as the Proton acceptor in the catalytic mechanism.

It belongs to the NAD(P)-dependent epimerase/dehydratase family. Homodimer. In roots, leaves, siliques, flowers, pollen and stems.

It is found in the golgi apparatus. The protein resides in the golgi stack membrane. It carries out the reaction UDP-alpha-D-glucuronate = UDP-alpha-D-galacturonate. Activated by glycerol, not effected by dimethyl sulfoxide and inhibited by high concentration of monovalent salts, UDP-xylose, UDP-arabinose or UDP. Its function is as follows. Involved in the synthesis of the negatively charged monosaccharide that forms the backbone of pectic cell wall components. The polypeptide is UDP-glucuronate 4-epimerase 4 (GAE4) (Arabidopsis thaliana (Mouse-ear cress)).